The chain runs to 118 residues: Large ribosomal subunit protein uL22c (118 aa).

The protein belongs to the universal ribosomal protein uL22 family. As to quaternary structure, part of the 50S ribosomal subunit.

The protein resides in the plastid. Its subcellular location is the organellar chromatophore. This protein binds specifically to 23S rRNA. In terms of biological role, the globular domain of the protein is located near the polypeptide exit tunnel on the outside of the subunit, while an extended beta-hairpin is found that lines the wall of the exit tunnel in the center of the 70S ribosome. This chain is Large ribosomal subunit protein uL22c (rpl22), found in Paulinella chromatophora.